Here is a 96-residue protein sequence, read N- to C-terminus: Putative pterin-4-alpha-carbinolamine dehydratase (96 aa).

Belongs to the pterin-4-alpha-carbinolamine dehydratase family.

The enzyme catalyses (4aS,6R)-4a-hydroxy-L-erythro-5,6,7,8-tetrahydrobiopterin = (6R)-L-erythro-6,7-dihydrobiopterin + H2O. In Prochlorococcus marinus (strain MIT 9312), this protein is Putative pterin-4-alpha-carbinolamine dehydratase.